Reading from the N-terminus, the 90-residue chain is YcgL domain-containing protein plu2139 (90 aa).

The YcgL domain occupies 1–85 (MICAIYSSPK…PVENLMNAHL (85 aa)).

This chain is YcgL domain-containing protein plu2139, found in Photorhabdus laumondii subsp. laumondii (strain DSM 15139 / CIP 105565 / TT01) (Photorhabdus luminescens subsp. laumondii).